Consider the following 163-residue polypeptide: Nucleotide-binding protein Pnap_1080 (163 aa).

This sequence belongs to the YajQ family.

In terms of biological role, nucleotide-binding protein. The chain is Nucleotide-binding protein Pnap_1080 from Polaromonas naphthalenivorans (strain CJ2).